Consider the following 317-residue polypeptide: UV DNA damage endonuclease (317 aa).

Belongs to the uve1/UvsE family.

Functionally, component in a DNA repair pathway. Removal of UV LIGHT damaged nucleotides. Recognizes pyrimidine dimers and cleave a phosphodiester bond immediately 5' to the lesion. The polypeptide is UV DNA damage endonuclease (Bacillus anthracis (strain A0248)).